The following is a 704-amino-acid chain: Matrix metalloproteinase-9 (704 aa).

An N-terminal signal peptide occupies residues 1–19 (MSPRQPLVLVFLVLGCCSA). A propeptide spans 20-106 (APRPHKPTVV…PRCGVPDLGK (87 aa)) (activation peptide). N-linked (GlcNAc...) asparagine glycosylation occurs at asparagine 38. The Cysteine switch motif lies at 97–104 (PRCGVPDL). Cysteine 99 is a binding site for Zn(2+). N-linked (GlcNAc...) asparagine glycosylation is present at asparagine 127. Residues aspartate 131 and aspartate 165 each contribute to the Ca(2+) site. Residues histidine 175 and aspartate 177 each coordinate Zn(2+). 4 residues coordinate Ca(2+): aspartate 182, glycine 183, asparagine 185, and leucine 187. Histidine 190 contributes to the Zn(2+) binding site. Ca(2+) contacts are provided by glycine 197, glutamine 199, and aspartate 201. Histidine 203 contributes to the Zn(2+) binding site. Residues aspartate 205, aspartate 206, and glutamate 208 each contribute to the Ca(2+) site. 3 consecutive Fibronectin type-II domains span residues 225–273 (ADGA…FCPS), 283–331 (GDGK…FCPT), and 342–390 (SAGE…FCPD). 6 cysteine pairs are disulfide-bonded: cysteine 230-cysteine 256, cysteine 244-cysteine 271, cysteine 288-cysteine 314, cysteine 302-cysteine 329, cysteine 347-cysteine 373, and cysteine 361-cysteine 388. Position 401 (histidine 401) interacts with Zn(2+). Glutamate 402 is a catalytic residue. Zn(2+) is bound by residues histidine 405 and histidine 411. Residues 434 to 507 (DDVRGIQHLY…PSEAPTVPVD (74 aa)) form a disordered region. Composition is skewed to pro residues over residues 450 to 461 (EPQPPTAPPTAP) and 483 to 496 (TGPP…PPTA). Cysteine 513 and cysteine 701 are disulfide-bonded. 4 Hemopexin repeats span residues 515–560 (VNIF…WPAL), 561–605 (PRKL…GLGP), 607–654 (VTQV…YPGV), and 655–701 (PLNT…ILQC).

The protein belongs to the peptidase M10A family. Exists as monomer or homodimer; disulfide-linked. Also exists as heterodimer with LCN2. Macrophages and transformed cell lines produce only the monomeric form. Interacts with ECM1. The cofactor is Zn(2+). Ca(2+) serves as cofactor. Post-translationally, N- and O-glycosylated.

Its subcellular location is the secreted. The protein resides in the extracellular space. It is found in the extracellular matrix. The catalysed reaction is Cleavage of gelatin types I and V and collagen types IV and V.. Functionally, matrix metalloproteinase that plays an essential role in local proteolysis of the extracellular matrix and in leukocyte migration. Could play a role in bone osteoclastic resorption. Cleaves KiSS1 at a Gly-|-Leu bond. Cleaves NINJ1 to generate the Secreted ninjurin-1 form. Cleaves type IV and type V collagen into large C-terminal three quarter fragments and shorter N-terminal one quarter fragments. Degrades fibronectin but not laminin or Pz-peptide. In Canis lupus familiaris (Dog), this protein is Matrix metalloproteinase-9 (MMP9).